A 260-amino-acid chain; its full sequence is Collagenase (260 aa).

Positions 1 to 16 (MKFLLVFALALATTSA) are cleaved as a signal peptide. Residues 17–30 (FQHPASIFELREGR) constitute a propeptide that is removed on maturation. The Peptidase S1 domain occupies 31-257 (IINGYEAYTG…YMDWIQQNTG (227 aa)). The cysteines at positions 60 and 76 are disulfide-linked. Active-site charge relay system residues include histidine 75 and aspartate 118. 2 disulfides stabilise this stretch: cysteine 181–cysteine 196 and cysteine 206–cysteine 234. Serine 210 acts as the Charge relay system in catalysis.

This sequence belongs to the peptidase S1 family.

It localises to the secreted. It catalyses the reaction Hydrolysis of proteins including native collagen at Xaa-|-Ala bond leaving an N-terminal (75%) and a C-terminal (25%) fragment.. Its activity is regulated as follows. Inhibited by diisopropylfluorophosphate. In terms of biological role, this enzyme is a serine protease capable of degrading the native triple helix of collagen. Also cleaves the B chain of insulin at the 15-Leu-|-Try-16 and 22-Arg-|-Gly-23 bonds. Hydrolyzes casein, but not Px-Pro-Leu-Gly-Pro-DArg, BzArgNHPh, AcTyrNHPh, 2-naphthyl phosphate, 2-naphthyl butyrate, 2-naphthyl caprylate, 2-naphthyl myristate, L-leucine 2-2-naphthylamide, L-valine 2-naphthylamide, L-cysteine 2-naphthylamide or L-glutarylphenylalanine 2-naphthylamide. This is Collagenase from Hypoderma lineatum (Early cattle grub).